A 608-amino-acid chain; its full sequence is RAS guanyl-releasing protein 2 (608 aa).

One can recognise an N-terminal Ras-GEF domain in the interval 4–126 (TLDLDKGCTV…SLIDIESVPT (123 aa)). Phosphoserine occurs at positions 116, 117, and 147. The 234-residue stretch at 154 to 387 (EPMELAEHLT…YQLSLQREPR (234 aa)) folds into the Ras-GEF domain. A disordered region spans residues 382 to 405 (LQREPRSKSSPTSPTSCTPPPRPP). 2 consecutive EF-hand domains span residues 426–461 (HIEKMVESVFRNFDVDGDGHISQEEFQIIRGNFPYL) and 463–490 (AFGDLDQNQDGCISREEMISYFLRSSSV). Residues aspartate 439, aspartate 441, aspartate 443, histidine 445, glutamate 450, aspartate 468, asparagine 470, aspartate 472, cysteine 474, and glutamate 479 each contribute to the Ca(2+) site. The segment at 498–548 (VHNLQESNSLRPVACRHCKALILGIYKQGLKCRACGVNCHKQCKDRLSVEC) adopts a Phorbol-ester/DAG-type zinc-finger fold. Phosphoserine is present on residues serine 554 and serine 575. Residues 555-596 (VSLEGSAPSPSPTHTHHRAFSFSLPRPGRRSSRPPEIREEEV) form a disordered region.

It belongs to the RASGRP family. In terms of assembly, forms a signaling complex with RAP1 and BRAF. Interacts with F-actin. Interacts with RAP1. In terms of tissue distribution, expressed in striatal neurons (at protein level). Expressed in the hematopoietic system. Detected in olfactory structures and deep cortical layers of brain.

It is found in the cytoplasm. The protein resides in the cytosol. It localises to the cell membrane. The protein localises to the synapse. Its subcellular location is the synaptosome. It is found in the cell projection. The protein resides in the ruffle membrane. In terms of biological role, functions as a calcium- and DAG-regulated nucleotide exchange factor specifically activating Rap through the exchange of bound GDP for GTP. May also activate other GTPases such as RRAS, RRAS2, NRAS, KRAS but not HRAS. Functions in aggregation of platelets and adhesion of T-lymphocytes and neutrophils probably through inside-out integrin activation. May function in the muscarinic acetylcholine receptor M1/CHRM1 signaling pathway. In Rattus norvegicus (Rat), this protein is RAS guanyl-releasing protein 2 (Rasgrp2).